The sequence spans 85 residues: Conotoxin Vx15a (85 aa).

An N-terminal signal peptide occupies residues 1-23 (MEKLTVLILVATVLLTIQVLAQS). The propeptide occupies 24–49 (DGDKHLMKRSKQYATKRLSALMRGHR). A Pyrrolidone carboxylic acid modification is found at Q50.

Belongs to the conotoxin O2 superfamily. Post-translationally, contains 4 disulfide bonds. In terms of tissue distribution, expressed by the venom duct.

The protein localises to the secreted. This chain is Conotoxin Vx15a, found in Conus vexillum (Flag cone).